The following is a 248-amino-acid chain: Adenosylcobinamide-GDP ribazoletransferase (248 aa).

The next 6 helical transmembrane spans lie at 36–56 (FFLPVVASIIGGMEFLIYLGL), 59–79 (FLPSNVIIVLLLLFTAMITGG), 114–134 (GTIALIIDLLLKYQLLYSLVL), 137–157 (YSIAIFLAPIIGRISILFLCL), 170–190 (IFIGNMSKPIVFFISTIVLVL), and 199–219 (ATIIPFIGALLITYLLYLLCL).

The protein belongs to the CobS family. It depends on Mg(2+) as a cofactor.

It localises to the cell membrane. It carries out the reaction alpha-ribazole + adenosylcob(III)inamide-GDP = adenosylcob(III)alamin + GMP + H(+). The enzyme catalyses alpha-ribazole 5'-phosphate + adenosylcob(III)inamide-GDP = adenosylcob(III)alamin 5'-phosphate + GMP + H(+). Its pathway is cofactor biosynthesis; adenosylcobalamin biosynthesis; adenosylcobalamin from cob(II)yrinate a,c-diamide: step 7/7. Its function is as follows. Joins adenosylcobinamide-GDP and alpha-ribazole to generate adenosylcobalamin (Ado-cobalamin). Also synthesizes adenosylcobalamin 5'-phosphate from adenosylcobinamide-GDP and alpha-ribazole 5'-phosphate. The chain is Adenosylcobinamide-GDP ribazoletransferase from Clostridium botulinum (strain Loch Maree / Type A3).